A 1139-amino-acid polypeptide reads, in one-letter code: Replication protein alpha-A (1139 aa).

Residues 60-438 (RRNISSEELQ…DGVKIAPDLI (379 aa)) form a methyltransferase region. Residues 81–305 (SSSACESGTH…HDLKDYLKYV (225 aa)) enclose the Alphavirus-like MT domain. The interval 611–637 (SPLDLKSIPGSTPSHSSSDSEHSMTEE) is disordered. Residues 617-627 (SIPGSTPSHSS) are compositionally biased toward low complexity. The (+)RNA virus helicase ATP-binding domain occupies 805 to 969 (DNTKLCNNWL…DYTKTIINPK (165 aa)). Residues 835 to 1109 (LIDGVPGCGK…SRHTKTFTYC (275 aa)) form a helicase region. 838 to 845 (GVPGCGKS) lines the ATP pocket. Residues 970–1139 (LRSYRIPGDV…PIRTFESHIV (170 aa)) form the (+)RNA virus helicase C-terminal domain.

As to quaternary structure, interacts with the suppressor of RNA silencing Gamma-B (via C-terminus).

It is found in the host chloroplast envelope. It carries out the reaction ATP + H2O = ADP + phosphate + H(+). Functionally, probably contains methyltransferase and helicase activities. Methyltransferase displays a cytoplasmic capping enzyme activity. This function is necessary since all viral RNAs are synthesized in the cytoplasm, and host capping enzymes are restricted to the nucleus. Helicase region probably exhibits NTPase and RNA unwinding activities. The chain is Replication protein alpha-A from Barley stripe mosaic virus (BSMV).